The following is a 322-amino-acid chain: Cytochrome f (322 aa).

An N-terminal signal peptide occupies residues 1–37 (MQNRKTYAYDWIKKWMIKSISTLIIINTMVWSSVSEA). Heme-binding residues include Tyr-38, Cys-58, Cys-61, and His-62. The chain crosses the membrane as a helical span at residues 285 to 307 (VLRVQGLLLFFASVILAQIFLVL).

The protein belongs to the cytochrome f family. In terms of assembly, the 4 large subunits of the cytochrome b6-f complex are cytochrome b6, subunit IV (17 kDa polypeptide, petD), cytochrome f and the Rieske protein, while the 4 small subunits are PetG, PetL, PetM and PetN. The complex functions as a dimer. The cofactor is heme.

Its subcellular location is the plastid. The protein resides in the chloroplast thylakoid membrane. Its function is as follows. Component of the cytochrome b6-f complex, which mediates electron transfer between photosystem II (PSII) and photosystem I (PSI), cyclic electron flow around PSI, and state transitions. In Anthoceros angustus (Hornwort), this protein is Cytochrome f (petA).